A 300-amino-acid chain; its full sequence is Energy-coupling factor transporter ATP-binding protein EcfA2 (300 aa).

Residues I3–L258 enclose the ABC transporter domain. G40–T47 contacts ATP.

Belongs to the ABC transporter superfamily. Energy-coupling factor EcfA family. Forms a stable energy-coupling factor (ECF) transporter complex composed of 2 membrane-embedded substrate-binding proteins (S component), 2 ATP-binding proteins (A component) and 2 transmembrane proteins (T component).

It localises to the cell membrane. ATP-binding (A) component of a common energy-coupling factor (ECF) ABC-transporter complex. Unlike classic ABC transporters this ECF transporter provides the energy necessary to transport a number of different substrates. In Mesomycoplasma hyopneumoniae (strain 7448) (Mycoplasma hyopneumoniae), this protein is Energy-coupling factor transporter ATP-binding protein EcfA2.